The following is a 339-amino-acid chain: Dihydroorotate dehydrogenase (quinone) (339 aa).

FMN is bound by residues 64-68 (AGADK) and Thr88. Position 68 (Lys68) interacts with substrate. Residue 113-117 (NRNGF) participates in substrate binding. FMN contacts are provided by Asn141 and Asn174. Asn174 provides a ligand contact to substrate. Ser177 (nucleophile) is an active-site residue. Residue Asn179 coordinates substrate. Lys219 and Thr247 together coordinate FMN. 248–249 (NT) provides a ligand contact to substrate. FMN-binding positions include Gly270, Gly299, and 320–321 (YS).

It belongs to the dihydroorotate dehydrogenase family. Type 2 subfamily. In terms of assembly, monomer. FMN is required as a cofactor.

The protein localises to the cell membrane. It catalyses the reaction (S)-dihydroorotate + a quinone = orotate + a quinol. Its pathway is pyrimidine metabolism; UMP biosynthesis via de novo pathway; orotate from (S)-dihydroorotate (quinone route): step 1/1. Catalyzes the conversion of dihydroorotate to orotate with quinone as electron acceptor. The protein is Dihydroorotate dehydrogenase (quinone) (pyrD) of Pasteurella multocida (strain Pm70).